The chain runs to 415 residues: MNVKDMLRQASDAAKQLITLSDQTIIGILKETAQVLRTHTEEVLAANRQDLERMDPANPKYDRLKLTEERLQGIAADMENVSTLPSPLNKVLSETIRPNGMVIRKVTVPFGVIGVIYEARPNVTFDVFSLCFRSGNACVLKGGSDADFSNRALVRIIHSVLERQGINPAVCTLLPPDREATAELLGAVGLVDLIIPRGSSSLIHFVREHAKVPVIETGAGICHTYFDRSGDKGKGREIVNNAKTRRVSVCNALDCLIIHRERLSDLPYICEKLPDSNVIIYADEPAYAALSEHYPETLLQQANENSFGTEFLDYKMSIRTVSSLDEVLSHIARYSSKHSESIISEDPETIRRFQQLVDAACVYANVSTAFTDGAQFGFGAEIGISTQKLHARGPMALPELTTYKYIIEGDGQTRI.

The protein belongs to the gamma-glutamyl phosphate reductase family.

The protein resides in the cytoplasm. The enzyme catalyses L-glutamate 5-semialdehyde + phosphate + NADP(+) = L-glutamyl 5-phosphate + NADPH + H(+). It participates in amino-acid biosynthesis; L-proline biosynthesis; L-glutamate 5-semialdehyde from L-glutamate: step 2/2. Its function is as follows. Catalyzes the NADPH-dependent reduction of L-glutamate 5-phosphate into L-glutamate 5-semialdehyde and phosphate. The product spontaneously undergoes cyclization to form 1-pyrroline-5-carboxylate. In Parabacteroides distasonis (strain ATCC 8503 / DSM 20701 / CIP 104284 / JCM 5825 / NCTC 11152), this protein is Gamma-glutamyl phosphate reductase.